The sequence spans 438 residues: Cyclic 2,3-diphosphoglycerate synthetase (438 aa).

Belongs to the cyclic 2,3-diphosphoglycerate synthetase family.

It is found in the cytoplasm. The catalysed reaction is (2R)-2,3-bisphosphoglycerate + ATP + H(+) = cyclic (2R)-2,3-bisphosphoglycerate + ADP + phosphate. Functionally, catalyzes the formation of cyclic 2,3-diphosphoglycerate (cDPG) by formation of an intramolecular phosphoanhydride bond at the expense of ATP. The sequence is that of Cyclic 2,3-diphosphoglycerate synthetase from Thermococcus gammatolerans (strain DSM 15229 / JCM 11827 / EJ3).